Consider the following 870-residue polypeptide: S-linalool synthase (870 aa).

Aspartate 547, aspartate 551, asparagine 689, serine 693, and glutamate 697 together coordinate Mg(2+). The DDXXD motif signature appears at 547 to 551 (DDFFD).

Belongs to the terpene synthase family. It depends on Mg(2+) as a cofactor. Requires Mn(2+) as cofactor. In terms of tissue distribution, highly expressed in cells of the transmitting tract of the stigma and style and in the epidermal cells of petals, as well as in stamens.

The enzyme catalyses (2E)-geranyl diphosphate + H2O = (S)-linalool + diphosphate. Functionally, involved in the biosynthesis of the acyclic monoterpene S-linalool, a major component of the strong sweet scent of the C.breweri flowers. The chain is S-linalool synthase (LIS) from Clarkia breweri (Fairy fans).